The sequence spans 124 residues: Transcription initiation factor IIA subunit 2 (124 aa).

The protein belongs to the TFIIA subunit 2 family. As to quaternary structure, TFIIA is a heterodimer composed of the large TOA1 and the small TOA2 subunits.

The protein resides in the nucleus. TFIIA is a component of the transcription machinery of RNA polymerase II and plays an important role in transcriptional activation. TFIIA in a complex with tbp mediates transcriptional activity. The sequence is that of Transcription initiation factor IIA subunit 2 (TOA2) from Cryptococcus neoformans var. neoformans serotype D (strain JEC21 / ATCC MYA-565) (Filobasidiella neoformans).